Consider the following 568-residue polypeptide: MESLGLQTVRLSDGTTAYVQQAVKGEKLLEGQVIQLEDGTTAYIHQVTIQKESFSFEDGQPVQLEDGSMAYIHHTPKEGCDPSALEAVQLEDGSTAYIHHPVPVPSDSAILAVQTEAGLEDLAAEDEEGFGTDTVVALEQYASKVLHDSPASHNGKGQQVGDRAFRCGYKGCGRLYTTAHHLKVHERAHTGDRPYRCDFPSCGKAFATGYGLKSHVRTHTGEKPYKCPEELCSKAFKTSGDLQKHVRTHTGERPFRCPFEGCGRSFTTSNIRKVHVRTHTGERPYTCPEPHCGRGFTSATNYKNHVRIHTGEKPYVCTVPGCGKRFTEYSSLYKHHVVHTHCKPYTCSSCGKTYRQTSTLAMHKRSAHGELEATEESEQALYEQQQLEAASAAEESPPPKPTHIAYLSEVKEESSAIPTQVAMVTEEDGPPQVALITQDGTQQVSLSPEDLQALGSAISVVTQHGSTTLTIPGHHEELATSGTHTVTMVSADGTQTQPVTIITSGALVTEDSSVASLHHQQVALLATANGTHIAVQLEDQQTLEEAISVATAAMQQGAVTLETTESGC.

Lys24 is covalently cross-linked (Glycyl lysine isopeptide (Lys-Gly) (interchain with G-Cter in SUMO2)). 3 tandem repeats follow at residues Ile34–His45, Val62–His73, and Val88–His99. The interval Ile34–His99 is 3 X 12 AA approximate repeats. 7 C2H2-type zinc fingers span residues Phe165–His189, Tyr195–His219, Tyr225–His249, Phe255–His279, Tyr285–His309, Tyr315–His339, and Tyr345–His368. The disordered stretch occupies residues Arg365–Thr402. A compositionally biased stretch (low complexity) spans Gln379–Glu395.

The protein belongs to the krueppel C2H2-type zinc-finger protein family.

It is found in the nucleus. In terms of biological role, may be involved in transcriptional regulation. This is Zinc finger protein 76 (Znf76) from Mus musculus (Mouse).